The primary structure comprises 374 residues: Queuine tRNA-ribosyltransferase (374 aa).

The active-site Proton acceptor is D92. Residues 92–96, D146, Q193, and G220 contribute to the substrate site; that span reads DSGGY. The tract at residues 251–257 is RNA binding; the sequence is GVGKPDD. The Nucleophile role is filled by D270. The segment at 275–279 is RNA binding; important for wobble base 34 recognition; it reads TRSGR. C308, C310, C313, and H339 together coordinate Zn(2+).

Belongs to the queuine tRNA-ribosyltransferase family. Homodimer. Within each dimer, one monomer is responsible for RNA recognition and catalysis, while the other monomer binds to the replacement base PreQ1. Requires Zn(2+) as cofactor.

The catalysed reaction is 7-aminomethyl-7-carbaguanine + guanosine(34) in tRNA = 7-aminomethyl-7-carbaguanosine(34) in tRNA + guanine. It functions in the pathway tRNA modification; tRNA-queuosine biosynthesis. In terms of biological role, catalyzes the base-exchange of a guanine (G) residue with the queuine precursor 7-aminomethyl-7-deazaguanine (PreQ1) at position 34 (anticodon wobble position) in tRNAs with GU(N) anticodons (tRNA-Asp, -Asn, -His and -Tyr). Catalysis occurs through a double-displacement mechanism. The nucleophile active site attacks the C1' of nucleotide 34 to detach the guanine base from the RNA, forming a covalent enzyme-RNA intermediate. The proton acceptor active site deprotonates the incoming PreQ1, allowing a nucleophilic attack on the C1' of the ribose to form the product. After dissociation, two additional enzymatic reactions on the tRNA convert PreQ1 to queuine (Q), resulting in the hypermodified nucleoside queuosine (7-(((4,5-cis-dihydroxy-2-cyclopenten-1-yl)amino)methyl)-7-deazaguanosine). This chain is Queuine tRNA-ribosyltransferase, found in Novosphingobium aromaticivorans (strain ATCC 700278 / DSM 12444 / CCUG 56034 / CIP 105152 / NBRC 16084 / F199).